The following is a 367-amino-acid chain: D-alanine--D-alanine ligase (367 aa).

Residues 141-346 (KNLFAQAGLR…YPELIERLIA (206 aa)) enclose the ATP-grasp domain. Position 174-229 (174-229 (ERELGYPCFVKPANAGSSVGISKCKQRGDLKAAFIEAFQYDRKIIIEEAIVGREIE)) interacts with ATP. Mg(2+) contacts are provided by Asp300, Glu313, and Asn315.

The protein belongs to the D-alanine--D-alanine ligase family. Requires Mg(2+) as cofactor. It depends on Mn(2+) as a cofactor.

The protein resides in the cytoplasm. It carries out the reaction 2 D-alanine + ATP = D-alanyl-D-alanine + ADP + phosphate + H(+). It participates in cell wall biogenesis; peptidoglycan biosynthesis. Cell wall formation. This Geobacillus kaustophilus (strain HTA426) protein is D-alanine--D-alanine ligase.